A 524-amino-acid chain; its full sequence is Cytokinin dehydrogenase 7 (524 aa).

The first 22 residues, Met1 to Gly22, serve as a signal peptide directing secretion. Asn42 carries an N-linked (GlcNAc...) asparagine glycan. In terms of domain architecture, FAD-binding PCMH-type spans Val55 to Ala233. 2 residues coordinate FAD: Gly91 and Gly93. Residue His94 is modified to Pros-8alpha-FAD histidine. Residues Ser95 and Gln99 each contribute to the FAD site. Asn121 carries N-linked (GlcNAc...) asparagine glycosylation. FAD contacts are provided by Asp157, Thr162, Ser168, Ile172, and Ile223. Residues Asn277 and Asn320 are each glycosylated (N-linked (GlcNAc...) asparagine). FAD is bound by residues Tyr472, Ser507, and Gln510.

The protein belongs to the oxygen-dependent FAD-linked oxidoreductase family. In terms of assembly, monomer. Requires FAD as cofactor.

Its subcellular location is the secreted. It is found in the extracellular space. It carries out the reaction N(6)-dimethylallyladenine + A + H2O = 3-methyl-2-butenal + adenine + AH2. Its function is as follows. Catalyzes the oxidation of cytokinins, a family of N(6)-substituted adenine derivatives that are plant hormones, where the substituent is an isopentenyl group. The chain is Cytokinin dehydrogenase 7 (CKX7) from Oryza sativa subsp. japonica (Rice).